Here is an 84-residue protein sequence, read N- to C-terminus: Metallothionein type 2b (84 aa).

The protein belongs to the metallothionein superfamily. Type 15 family. In terms of tissue distribution, expressed in leaves, stems and roots.

It is found in the cytoplasm. Its subcellular location is the nucleus. Metallothioneins have a high content of cysteine residues that bind various heavy metals. Probably involved in maintaining homeostasis of essential transition metals and detoxification of toxic metals. Increases cadmium and zinc tolerance when expressed in heterologous systems. Metal chelator binding 6 cadmium or 5 zinc atoms per protein. In Colocasia esculenta (Wild taro), this protein is Metallothionein type 2b.